The sequence spans 155 residues: MSRRGTAEEKTAKSDPIYRNRLVNMLVNRILKHGKKSLAYQILYRAMKKIQQKTETNPLSVLHQAIRGVTPDIAVKARRVGGSTHQVPIEIGSTQGKALAIRWLLGASRKRPGRNMVFKLSSELVDAAKGSGDAIRKKEETHRMAEANRAFAHFR.

It belongs to the universal ribosomal protein uS7 family. Part of the 30S ribosomal subunit.

The protein localises to the plastid. Its subcellular location is the chloroplast. One of the primary rRNA binding proteins, it binds directly to 16S rRNA where it nucleates assembly of the head domain of the 30S subunit. The chain is Small ribosomal subunit protein uS7cz/uS7cy (rps7-A) from Populus trichocarpa (Western balsam poplar).